A 400-amino-acid polypeptide reads, in one-letter code: Phosphoglycerate kinase (400 aa).

Substrate contacts are provided by residues 23 to 25 (DLN), Arg38, 61 to 64 (HFGR), Arg120, and Arg153. Residues Lys203, Glu325, and 355-358 (GGDT) contribute to the ATP site.

It belongs to the phosphoglycerate kinase family. In terms of assembly, monomer.

Its subcellular location is the cytoplasm. It carries out the reaction (2R)-3-phosphoglycerate + ATP = (2R)-3-phospho-glyceroyl phosphate + ADP. Its pathway is carbohydrate degradation; glycolysis; pyruvate from D-glyceraldehyde 3-phosphate: step 2/5. This chain is Phosphoglycerate kinase, found in Methylorubrum extorquens (strain CM4 / NCIMB 13688) (Methylobacterium extorquens).